Here is a 247-residue protein sequence, read N- to C-terminus: Glucosamine-6-phosphate deaminase (247 aa).

Residue Asp-67 is the Proton acceptor; for enolization step of the active site. Residue Asn-136 is the For ring-opening step of the active site. The active-site Proton acceptor; for ring-opening step is the His-138. The For ring-opening step role is filled by Glu-143.

It belongs to the glucosamine/galactosamine-6-phosphate isomerase family. NagB subfamily.

The enzyme catalyses alpha-D-glucosamine 6-phosphate + H2O = beta-D-fructose 6-phosphate + NH4(+). The protein operates within amino-sugar metabolism; N-acetylneuraminate degradation; D-fructose 6-phosphate from N-acetylneuraminate: step 5/5. Catalyzes the reversible isomerization-deamination of glucosamine 6-phosphate (GlcN6P) to form fructose 6-phosphate (Fru6P) and ammonium ion. The sequence is that of Glucosamine-6-phosphate deaminase from Shouchella clausii (strain KSM-K16) (Alkalihalobacillus clausii).